Reading from the N-terminus, the 103-residue chain is MATYAIVKTGGKQYKVAVGDLVKVEKIEGEPGAAVELSPVLVVDGAELTTEAEALAKRSVTAELVEQTKGPKIRIHKFKNKTGYHKRQGHRQPLTVLKVTGIK.

Belongs to the bacterial ribosomal protein bL21 family. In terms of assembly, part of the 50S ribosomal subunit. Contacts protein L20.

In terms of biological role, this protein binds to 23S rRNA in the presence of protein L20. The polypeptide is Large ribosomal subunit protein bL21 (Nocardia farcinica (strain IFM 10152)).